A 166-amino-acid polypeptide reads, in one-letter code: Succinate dehydrogenase [ubiquinone] cytochrome b small subunit, mitochondrial (166 aa).

The Mitochondrial matrix segment spans residues 1 to 65 (MASVARSSAL…VPPPSPSHGS (65 aa)). Residues 66–87 (YHWTFDRVVAAGLIPLTVAPFA) traverse the membrane as a helical segment. Residues 88-94 (AGSLNPT) lie on the Mitochondrial intermembrane side of the membrane. The helical transmembrane segment at 95 to 115 (MDAVLAATILIHSHTGFGNII) threads the bilayer. Residue His-106 participates in heme binding. Over 116–124 (VDYVPSKRV) the chain is Mitochondrial matrix. Tyr-118 contacts a ubiquinone. A helical transmembrane segment spans residues 125-149 (PKARKVFTWGLNAATVLVGLALYEF). Over 150–166 (ETTDVGLTETIKRVWKA) the chain is Mitochondrial intermembrane.

The protein belongs to the CybS family. As to quaternary structure, forms part of complex II containing four subunits: a flavoprotein (FP), an iron-sulfur protein (IP) and a cytochrome b composed of a large and a small subunit.

The protein resides in the mitochondrion inner membrane. The protein operates within carbohydrate metabolism; tricarboxylic acid cycle. Its function is as follows. Membrane-anchoring subunit of succinate dehydrogenase (SDH) that is involved in complex II of the mitochondrial electron transport chain and is responsible for transferring electrons from succinate to ubiquinone (coenzyme Q). In Neurospora crassa (strain ATCC 24698 / 74-OR23-1A / CBS 708.71 / DSM 1257 / FGSC 987), this protein is Succinate dehydrogenase [ubiquinone] cytochrome b small subunit, mitochondrial.